The sequence spans 340 residues: UDP-N-acetylenolpyruvoylglucosamine reductase (340 aa).

Residues 14–185 (HVEATARWLL…VAVEFNLPLL (172 aa)) enclose the FAD-binding PCMH-type domain. The active site involves arginine 162. Serine 235 (proton donor) is an active-site residue. The active site involves glutamate 332.

It belongs to the MurB family. It depends on FAD as a cofactor.

It is found in the cytoplasm. It carries out the reaction UDP-N-acetyl-alpha-D-muramate + NADP(+) = UDP-N-acetyl-3-O-(1-carboxyvinyl)-alpha-D-glucosamine + NADPH + H(+). Its pathway is cell wall biogenesis; peptidoglycan biosynthesis. Functionally, cell wall formation. This Xanthomonas oryzae pv. oryzae (strain KACC10331 / KXO85) protein is UDP-N-acetylenolpyruvoylglucosamine reductase.